The sequence spans 290 residues: Xylanase inhibitor protein 2 (290 aa).

Positions 1–27 (MGLVHALLPFAAAAALLLLAAPPPATA) are cleaved as a signal peptide. The GH18 domain maps to 30 to 290 (PGLAVYWGRH…DKKANYTGEG (261 aa)). A disulfide bridge connects residues Cys-49 and Cys-89. Asn-112 carries an N-linked (GlcNAc...) asparagine glycan. Cys-187 and Cys-216 are joined by a disulfide. An N-linked (GlcNAc...) asparagine glycan is attached at Asn-285.

The protein belongs to the glycosyl hydrolase 18 family. Xylanase inhibitor subfamily. As to quaternary structure, binds to fungal GH10 xylanases.

It localises to the secreted. Functionally, fungal xylanase inhibitor. Possesses competitive inhibiting activity against several fungal endo-1,4-beta-D-xylanases belonging to glycoside hydrolase family 10 (GH10) and family 11 (GH11). May function in plant defense against secreted fungal pathogen xylanases. Is similar to class III chitinases, but does not exhibit chitinase activity. This is Xylanase inhibitor protein 2 from Oryza sativa subsp. japonica (Rice).